The sequence spans 61 residues: Large ribosomal subunit protein uL30 (61 aa).

It belongs to the universal ribosomal protein uL30 family. As to quaternary structure, part of the 50S ribosomal subunit.

The sequence is that of Large ribosomal subunit protein uL30 from Legionella pneumophila (strain Paris).